Reading from the N-terminus, the 229-residue chain is Protein TraJ (229 aa).

Its subcellular location is the cytoplasm. Its function is as follows. This protein is essential for positively regulating the expression of transfer genes that are involved in the conjugal transfer of DNA between bacterial cells. This chain is Protein TraJ (traJ), found in Escherichia coli (strain K12).